Reading from the N-terminus, the 314-residue chain is tRNA uridine(34) hydroxylase (314 aa).

The Rhodanese domain occupies 135–229 (ADPETLVIDT…YLEQIPAEES (95 aa)). C189 functions as the Cysteine persulfide intermediate in the catalytic mechanism.

Belongs to the TrhO family.

It catalyses the reaction uridine(34) in tRNA + AH2 + O2 = 5-hydroxyuridine(34) in tRNA + A + H2O. In terms of biological role, catalyzes oxygen-dependent 5-hydroxyuridine (ho5U) modification at position 34 in tRNAs. This Sinorhizobium fredii (strain NBRC 101917 / NGR234) protein is tRNA uridine(34) hydroxylase.